We begin with the raw amino-acid sequence, 108 residues long: Large ribosomal subunit protein bL31B (108 aa).

The disordered stretch occupies residues 88-108 (AAVEEAPAVKSKKKAPIKKKK). A compositionally biased stretch (basic residues) spans 97–108 (KSKKKAPIKKKK).

This sequence belongs to the bacterial ribosomal protein bL31 family. Type B subfamily. As to quaternary structure, part of the 50S ribosomal subunit.

This chain is Large ribosomal subunit protein bL31B, found in Chlamydia abortus (strain DSM 27085 / S26/3) (Chlamydophila abortus).